The sequence spans 370 residues: GMP synthase [glutamine-hydrolyzing] subunit B (370 aa).

In terms of domain architecture, GMPS ATP-PPase spans 3 to 189 (FDPQKFVDEI…LGLPRDIYNR (187 aa)). 29 to 35 (SGGVDST) provides a ligand contact to ATP.

As to quaternary structure, heterodimer composed of a glutamine amidotransferase subunit (A) and a GMP-binding subunit (B).

It catalyses the reaction XMP + L-glutamine + ATP + H2O = GMP + L-glutamate + AMP + diphosphate + 2 H(+). It functions in the pathway purine metabolism; GMP biosynthesis; GMP from XMP (L-Gln route): step 1/1. Catalyzes the synthesis of GMP from XMP. This is GMP synthase [glutamine-hydrolyzing] subunit B (guaAB) from Sulfurisphaera tokodaii (strain DSM 16993 / JCM 10545 / NBRC 100140 / 7) (Sulfolobus tokodaii).